The primary structure comprises 244 residues: MKIFKPALWKIPPIENGSETALAEKTETLKQRLHRIAGSHRDARFASSLAAEDMVITDLIAGENLNIGIFTLDTGLLHAETLNLLDRIERVYPHMQIKRFQPIREDALHYVESKGRFAFYDSVEARRECCRIRKTEPLDRAIAGADAWLTGQRREQSATRTELPFAEYDAGRGIDKYNPIFDWSEHDVWAYILANNVPYNDLYRQGFPSIGCDPCTRPVKAGEDIRAGRWWWEDKNSKECGLHK.

The [4Fe-4S] cluster site is built by cysteine 129, cysteine 130, cysteine 212, and cysteine 215. The Nucleophile; cysteine thiosulfonate intermediate role is filled by cysteine 240.

The protein belongs to the PAPS reductase family. CysH subfamily. It depends on [4Fe-4S] cluster as a cofactor.

The protein resides in the cytoplasm. It carries out the reaction [thioredoxin]-disulfide + sulfite + AMP + 2 H(+) = adenosine 5'-phosphosulfate + [thioredoxin]-dithiol. It participates in sulfur metabolism; hydrogen sulfide biosynthesis; sulfite from sulfate. Its function is as follows. Catalyzes the formation of sulfite from adenosine 5'-phosphosulfate (APS) using thioredoxin as an electron donor. In Neisseria meningitidis serogroup A / serotype 4A (strain DSM 15465 / Z2491), this protein is Adenosine 5'-phosphosulfate reductase.